The following is a 176-amino-acid chain: MYRIYTRTGDNGTTALFGGSRIDKDDIRVEAYGTVDELISQLGVCYASTRQAELRQELHAMQKMLFVLGAELASDQKGLTRLKQRIGEEDIQALEQLIDRNMAQSGPLKEFVIPGKNLASAQLHVARTLTRRLERILIAMGRTLTLRDEARRYINRLSDALFSMARIEETTPDVCA.

ATP-binding positions include 6 to 14 (TRTGDNGTT), lysine 24, 131 to 136 (RRLERI), and asparagine 155.

The protein belongs to the Cob(I)alamin adenosyltransferase family.

Its subcellular location is the cytoplasm. It catalyses the reaction 2 cob(II)yrinate a,c diamide + reduced [electron-transfer flavoprotein] + 2 ATP = 2 adenosylcob(III)yrinate a,c-diamide + 2 triphosphate + oxidized [electron-transfer flavoprotein] + 3 H(+). The catalysed reaction is 2 cob(II)alamin + reduced [electron-transfer flavoprotein] + 2 ATP = 2 adenosylcob(III)alamin + 2 triphosphate + oxidized [electron-transfer flavoprotein] + 3 H(+). Its pathway is cofactor biosynthesis; adenosylcobalamin biosynthesis; adenosylcobalamin from cob(II)yrinate a,c-diamide: step 2/7. The protein is Corrinoid adenosyltransferase of Citrobacter freundii.